The sequence spans 103 residues: Protein Rev (103 aa).

Phosphoserine; by host CK2 is present on S5. The homomultimerization stretch occupies residues 17 to 25 (IIKILYQSN). 2 disordered regions span residues 24–49 (SNPCPTPAGSRNARKNRRRRWRRRQA) and 82–103 (IRDPEADRLPGTGTVDPGTKDN). The short motif at 33–49 (SRNARKNRRRRWRRRQA) is the Nuclear localization signal and RNA-binding (RRE) element. A compositionally biased stretch (basic residues) spans 35 to 48 (NARKNRRRRWRRRQ). The short motif at 72–83 (VDLPPLEQLNIR) is the Nuclear export signal and binding to XPO1 element.

The protein belongs to the HIV-1 REV protein family. In terms of assembly, homomultimer; when bound to the RRE. Multimeric assembly is essential for activity and may involve XPO1. Binds to human KPNB1, XPO1, TNPO1, RANBP5 and IPO7. Interacts with the viral Integrase. Interacts with human KHDRBS1. Interacts with human NAP1; this interaction decreases Rev multimerization and stimulates its activity. Interacts with human DEAD-box helicases DDX3 and DDX24; these interactions may serve for viral RNA export to the cytoplasm and packaging, respectively. Interacts with human PSIP1; this interaction may inhibit HIV-1 DNA integration by promoting dissociation of the Integrase-LEDGF/p75 complex. In terms of processing, asymmetrically arginine dimethylated at one site by host PRMT6. Methylation impairs the RNA-binding activity and export of viral RNA from the nucleus to the cytoplasm. Post-translationally, phosphorylated by protein kinase CK2. Presence of, and maybe binding to the N-terminus of the regulatory beta subunit of CK2 is necessary for CK2-mediated Rev's phosphorylation.

It localises to the host nucleus. The protein resides in the host nucleolus. It is found in the host cytoplasm. Escorts unspliced or incompletely spliced viral pre-mRNAs (late transcripts) out of the nucleus of infected cells. These pre-mRNAs carry a recognition sequence called Rev responsive element (RRE) located in the env gene, that is not present in fully spliced viral mRNAs (early transcripts). This function is essential since most viral proteins are translated from unspliced or partially spliced pre-mRNAs which cannot exit the nucleus by the pathway used by fully processed cellular mRNAs. Rev itself is translated from a fully spliced mRNA that readily exits the nucleus. Rev's nuclear localization signal (NLS) binds directly to KPNB1/Importin beta-1 without previous binding to KPNA1/Importin alpha-1. KPNB1 binds to the GDP bound form of RAN (Ran-GDP) and targets Rev to the nucleus. In the nucleus, the conversion from Ran-GDP to Ran-GTP dissociates Rev from KPNB1 and allows Rev's binding to the RRE in viral pre-mRNAs. Rev multimerization on the RRE via cooperative assembly exposes its nuclear export signal (NES) to the surface. Rev can then form a complex with XPO1/CRM1 and Ran-GTP, leading to nuclear export of the complex. Conversion from Ran-GTP to Ran-GDP mediates dissociation of the Rev/RRE/XPO1/RAN complex, so that Rev can return to the nucleus for a subsequent round of export. Beside KPNB1, also seems to interact with TNPO1/Transportin-1, RANBP5/IPO5 and IPO7/RANBP7 for nuclear import. The nucleoporin-like HRB/RIP is an essential cofactor that probably indirectly interacts with Rev to release HIV RNAs from the perinuclear region to the cytoplasm. In Human immunodeficiency virus type 1 group O (isolate MVP5180) (HIV-1), this protein is Protein Rev.